The chain runs to 215 residues: 3-dehydroquinate dehydratase (215 aa).

Residues 30–32 and R62 contribute to the 3-dehydroquinate site; that span reads EVR. H114 acts as the Proton donor/acceptor in catalysis. K140 acts as the Schiff-base intermediate with substrate in catalysis. Positions 178 and 201 each coordinate 3-dehydroquinate.

It belongs to the type-I 3-dehydroquinase family. Homodimer.

It carries out the reaction 3-dehydroquinate = 3-dehydroshikimate + H2O. It functions in the pathway metabolic intermediate biosynthesis; chorismate biosynthesis; chorismate from D-erythrose 4-phosphate and phosphoenolpyruvate: step 3/7. In terms of biological role, involved in the third step of the chorismate pathway, which leads to the biosynthesis of aromatic amino acids. Catalyzes the cis-dehydration of 3-dehydroquinate (DHQ) and introduces the first double bond of the aromatic ring to yield 3-dehydroshikimate. This chain is 3-dehydroquinate dehydratase, found in Methanopyrus kandleri (strain AV19 / DSM 6324 / JCM 9639 / NBRC 100938).